Reading from the N-terminus, the 422-residue chain is Roquefortine prenyltransferase roqD (422 aa).

Glu100 provides a ligand contact to substrate. Dimethylallyl diphosphate-binding residues include Arg113, Lys200, and Tyr202. Tyr204 contacts substrate. Dimethylallyl diphosphate-binding residues include Lys268, Tyr270, Tyr353, Tyr416, and Tyr420.

The protein belongs to the tryptophan dimethylallyltransferase family.

Its pathway is alkaloid biosynthesis. In terms of biological role, roquefortine prenyltransferase; part of the gene cluster that mediates the biosynthesis of the mycotoxins roquefortine C and meleagrin. The first stage is catalyzed by the dipeptide synthase roqA which condenses histidine and tryptophan to produce histidyltryptophanyldiketopiperazine (HTD). HTD is then converted to roquefortine C through two possible pathways. In the first pathway, prenyltransferase roqD transforms HTD to the intermediate roquefortine D, which is in turn converted to roquefortine C by the cytochrome P450 monooxygenase roqR. In the second pathway, HTD is first converted to the intermediate dehydrohistidyltryptophanyldi-ketopiperazine (DHTD) by roqR which is then prenylated by roqD to form roquefortine C. Roquefortine C can be further transformed to meleagrin via three more reactions including oxydation to glandicolin A by roqM, which is further reduced to glandicoline B by roqO. Finally, glandicoline B is converted to meleagrin by the glandicoline B O-methyltransferase roqN. More studies identified further branching and additional metabolites produced by the roquefortine/meleagrin cluster, including roquefortine F, roquefortine L, roquefortine M, roquefortine N and neoxaline. The polypeptide is Roquefortine prenyltransferase roqD (Penicillium rubens (strain ATCC 28089 / DSM 1075 / NRRL 1951 / Wisconsin 54-1255) (Penicillium chrysogenum)).